We begin with the raw amino-acid sequence, 395 residues long: F-box protein At5g46170 (395 aa).

Residues I24–V72 form the F-box domain. Residues T122–H158 form a disordered region. Residues S125 to S142 show a composition bias toward low complexity.

This is F-box protein At5g46170 from Arabidopsis thaliana (Mouse-ear cress).